A 186-amino-acid chain; its full sequence is Probable GTP-binding protein EngB (186 aa).

An EngB-type G domain is found at 18–186 (DKKEICFIGR…LKKLIGSVIL (169 aa)). GTP contacts are provided by residues 26–33 (GRSNVGKS), 52–56 (GRTQL), 69–72 (DLPG), 135–138 (NKAD), and 166–168 (VSA). The Mg(2+) site is built by Ser-33 and Thr-54.

This sequence belongs to the TRAFAC class TrmE-Era-EngA-EngB-Septin-like GTPase superfamily. EngB GTPase family. Mg(2+) is required as a cofactor.

Its function is as follows. Necessary for normal cell division and for the maintenance of normal septation. The polypeptide is Probable GTP-binding protein EngB (Malacoplasma penetrans (strain HF-2) (Mycoplasma penetrans)).